We begin with the raw amino-acid sequence, 509 residues long: Putative (R)-citramalate synthase CimA (509 aa).

The Pyruvate carboxyltransferase domain maps to 14–267 (VRIFDTTLRD…DTGIRTERLT (254 aa)).

Belongs to the alpha-IPM synthase/homocitrate synthase family. As to quaternary structure, homodimer.

The enzyme catalyses pyruvate + acetyl-CoA + H2O = (3R)-citramalate + CoA + H(+). Its pathway is amino-acid biosynthesis; L-isoleucine biosynthesis; 2-oxobutanoate from pyruvate: step 1/3. Catalyzes the condensation of pyruvate and acetyl-coenzyme A to form (R)-citramalate. This is Putative (R)-citramalate synthase CimA (cimA) from Methanopyrus kandleri (strain AV19 / DSM 6324 / JCM 9639 / NBRC 100938).